A 115-amino-acid chain; its full sequence is Hydrogenase maturation factor HypA (115 aa).

Position 2 (H2) interacts with Ni(2+). Residues C74, C77, C90, and C93 each contribute to the Zn(2+) site.

The protein belongs to the HypA/HybF family.

In terms of biological role, involved in the maturation of [NiFe] hydrogenases. Required for nickel insertion into the metal center of the hydrogenase. The chain is Hydrogenase maturation factor HypA from Desulfosudis oleivorans (strain DSM 6200 / JCM 39069 / Hxd3) (Desulfococcus oleovorans).